Consider the following 375-residue polypeptide: Serpin B5 (375 aa).

N99, N133, N155, N188, and N361 each carry an N-linked (GlcNAc...) asparagine glycan.

This sequence belongs to the serpin family. Ov-serpin subfamily. In terms of assembly, interacts with IRF6.

The protein localises to the secreted. It localises to the extracellular space. Its function is as follows. Tumor suppressor. It blocks the growth, invasion, and metastatic properties of mammary tumors. As it does not undergo the S (stressed) to R (relaxed) conformational transition characteristic of active serpins, it exhibits no serine protease inhibitory activity. In Plecturocebus moloch (Dusky titi monkey), this protein is Serpin B5 (SERPINB5).